The following is a 169-amino-acid chain: Cell division inhibitor SulA (169 aa).

Residues 106–112 (ALRTGNY) are ftsZ binding. The tract at residues 162 to 169 (KIHSNLYH) is lon protease binding.

The protein belongs to the SulA family. In terms of assembly, interacts with FtsZ. In terms of processing, is rapidly cleaved and degraded by the Lon protease once DNA damage is repaired.

Component of the SOS system and an inhibitor of cell division. Accumulation of SulA causes rapid cessation of cell division and the appearance of long, non-septate filaments. In the presence of GTP, binds a polymerization-competent form of FtsZ in a 1:1 ratio, thus inhibiting FtsZ polymerization and therefore preventing it from participating in the assembly of the Z ring. This mechanism prevents the premature segregation of damaged DNA to daughter cells during cell division. This chain is Cell division inhibitor SulA, found in Shigella flexneri serotype 5b (strain 8401).